Reading from the N-terminus, the 436-residue chain is Citrate synthase (436 aa).

Active-site residues include H313 and D371.

It belongs to the citrate synthase family. As to quaternary structure, homohexamer.

It carries out the reaction oxaloacetate + acetyl-CoA + H2O = citrate + CoA + H(+). Its pathway is carbohydrate metabolism; tricarboxylic acid cycle; isocitrate from oxaloacetate: step 1/2. This Acetobacter aceti protein is Citrate synthase (aarA).